Reading from the N-terminus, the 660-residue chain is DNA ligase (660 aa).

Residues 33 to 37 (DFVYD), 82 to 83 (SL), and glutamate 110 each bind NAD(+). The active-site N6-AMP-lysine intermediate is the lysine 112. The NAD(+) site is built by arginine 133, glutamate 167, lysine 281, and lysine 305. Zn(2+) is bound by residues cysteine 396, cysteine 399, cysteine 412, and cysteine 417. The region spanning 583-660 (GENKLLAGKK…SFEDIKSYLD (78 aa)) is the BRCT domain.

Belongs to the NAD-dependent DNA ligase family. LigA subfamily. It depends on Mg(2+) as a cofactor. Requires Mn(2+) as cofactor.

The enzyme catalyses NAD(+) + (deoxyribonucleotide)n-3'-hydroxyl + 5'-phospho-(deoxyribonucleotide)m = (deoxyribonucleotide)n+m + AMP + beta-nicotinamide D-nucleotide.. In terms of biological role, DNA ligase that catalyzes the formation of phosphodiester linkages between 5'-phosphoryl and 3'-hydroxyl groups in double-stranded DNA using NAD as a coenzyme and as the energy source for the reaction. It is essential for DNA replication and repair of damaged DNA. This Borreliella burgdorferi (strain ZS7) (Borrelia burgdorferi) protein is DNA ligase.